Here is a 136-residue protein sequence, read N- to C-terminus: Histone H3, embryonic (136 aa).

Residues Met1–Arg43 form a disordered region. Lys5 carries the N6-methylated lysine modification. At Lys10 the chain carries N6-acetyllysine; alternate. Lys10 bears the N6-methylated lysine; alternate mark. Ser11 is subject to Phosphoserine. N6-acetyllysine is present on residues Lys15 and Lys24. Residues Lys28, Lys37, and Lys80 each carry the N6-methylated lysine modification.

The protein belongs to the histone H3 family. The nucleosome is a histone octamer containing two molecules each of H2A, H2B, H3 and H4 assembled in one H3-H4 heterotetramer and two H2A-H2B heterodimers. The octamer wraps approximately 147 bp of DNA. Acetylation is generally linked to gene activation. In terms of processing, methylation at Lys-5 is linked to gene activation. Methylation at Lys-10 is linked to gene repression.

The protein resides in the nucleus. It localises to the chromosome. Its function is as follows. Core component of nucleosome. Nucleosomes wrap and compact DNA into chromatin, limiting DNA accessibility to the cellular machineries which require DNA as a template. Histones thereby play a central role in transcription regulation, DNA repair, DNA replication and chromosomal stability. DNA accessibility is regulated via a complex set of post-translational modifications of histones, also called histone code, and nucleosome remodeling. This Paracentrotus lividus (Common sea urchin) protein is Histone H3, embryonic.